The sequence spans 71 residues: MAEDVRAEIVASVLEVVVSEGDQIGKGDVLVLLESMKMEIPVLAGVAGIVSKVSVSVGDVIQAGDLIAVIS.

One can recognise a Biotinyl-binding domain in the interval 2–71; it reads AEDVRAEIVA…QAGDLIAVIS (70 aa). Lys37 is subject to N6-biotinyllysine.

This is Biotinylated protein TB7.3 homolog from Mycobacterium leprae (strain TN).